The chain runs to 981 residues: Echinoderm microtubule-associated protein-like 4 (981 aa).

Methionine 1 is subject to N-acetylmethionine. Disordered regions lie at residues 1–20 (MDGF…TSDV) and 57–205 (DHVA…PKLI). The microtubule-binding stretch occupies residues 1-249 (MDGFAGSLDD…IPSDVDNYDD (249 aa)). A phosphoserine mark is found at serine 7, serine 13, serine 16, and serine 61. A coiled-coil region spans residues 14–63 (AASTSDVQDRLSALESRVQQQEDEITVLKAALADVLRRLAISEDHVASVK). Residue threonine 96 is modified to Phosphothreonine. Positions 114–134 (GTEKKKEKPQGQREKKEESHS) are enriched in basic and acidic residues. At serine 134 the chain carries Phosphoserine; by NEK7. A compositionally biased stretch (low complexity) spans 137–155 (QSPQIRASPSPQPSSQPLQ). Serine 144 is subject to Phosphoserine; by NEK6. Serine 146 carries the post-translational modification Phosphoserine; by NEK7. Serine 171 carries the post-translational modification Phosphoserine. The span at 176 to 193 (SPAEKSHNSWENSDDSRN) shows a compositional bias: basic and acidic residues. Serine 200 carries the post-translational modification Phosphoserine. Threonine 201 bears the Phosphothreonine mark. Tyrosine 226 is modified (phosphotyrosine). The residue at position 237 (threonine 237) is a Phosphothreonine. 5 WD repeats span residues 259–297 (LKLE…LFNY), 301–348 (TQRH…VWDS), 356–396 (IIGL…VWDW), 403–438 (AEIK…FWTW), and 445–484 (RKQG…IWSK). Threonine 490 carries the phosphothreonine; by NEK6 modification. 8 WD repeats span residues 500–538 (QISK…LWDH), 543–579 (EREI…LRGT), 582–621 (DGFQ…LWNS), 625–662 (RLEW…VLDA), 668–704 (VSIH…LYVV), 711–750 (YSRY…YWDI), 760–818 (RSDC…LFQY), and 825–864 (APSH…QWKL). Threonine 609 carries the post-translational modification Phosphothreonine; by NEK6 and NEK7. The segment covering 881 to 893 (LTKAPVSSTESVI) has biased composition (polar residues). The interval 881-981 (LTKAPVSSTE…EDQQDPSPSS (101 aa)) is disordered. Phosphoserine is present on residues serine 891 and serine 895. A phosphothreonine mark is found at threonine 897 and threonine 899. Serine 903 is subject to Phosphoserine. Residues 916 to 931 (ISSSPTLLENSLEQTV) are compositionally biased toward polar residues. The segment covering 937–946 (HSEEESEEGS) has biased composition (acidic residues). Serine 978 carries the post-translational modification Phosphoserine. Serine 981 is subject to Phosphoserine; by NEK6 and NEK7.

The protein belongs to the WD repeat EMAP family. Homotrimer; self-association is mediated by the N-terminal coiled coil. Interacts (via WD repeats) with NUDC. Interacts with alpha- and beta-tubulin during mitosis. Post-translationally, phosphorylated during mitosis. Phosphorylation at Ser-144 and Ser-146 promotes its dissociation from microtubules during mitosis which is required for efficient chromosome congression.

It is found in the cytoplasm. The protein resides in the cytoskeleton. Its subcellular location is the spindle. It localises to the microtubule organizing center. The protein localises to the midbody. Its function is as follows. Essential for the formation and stability of microtubules (MTs). Required for the organization of the mitotic spindle and for the proper attachment of kinetochores to MTs. Promotes the recruitment of NUDC to the mitotic spindle for mitotic progression. The protein is Echinoderm microtubule-associated protein-like 4 (EML4) of Homo sapiens (Human).